The chain runs to 285 residues: N(G),N(G)-dimethylarginine dimethylaminohydrolase 1 (285 aa).

Ala2 is subject to N-acetylalanine. Residue Leu30 coordinates substrate. The residue at position 33 (Ser33) is a Phosphoserine. Substrate is bound by residues Asp73, Glu78, Asp79, Arg98, and Arg145. Residue His173 is the Proton donor of the active site. Cys222 is subject to S-nitrosocysteine. Val268 contacts substrate. Cys274 carries the post-translational modification S-nitrosocysteine. The active-site Nucleophile is the Cys274. Zn(2+) is bound at residue Cys274.

The protein belongs to the DDAH family. Monomer. In terms of tissue distribution, detected in skeletal muscle, lung, heart, liver, kidney and brain (at protein level).

It catalyses the reaction N(omega),N(omega)-dimethyl-L-arginine + H2O = dimethylamine + L-citrulline. The catalysed reaction is N(omega)-methyl-L-arginine + H2O = L-citrulline + methylamine. Inhibited by zinc ions. Functionally, hydrolyzes N(G),N(G)-dimethyl-L-arginine (ADMA) and N(G)-monomethyl-L-arginine (MMA) which act as inhibitors of NOS. Has therefore a role in the regulation of nitric oxide generation. The polypeptide is N(G),N(G)-dimethylarginine dimethylaminohydrolase 1 (Ddah1) (Mus musculus (Mouse)).